Consider the following 187-residue polypeptide: Putative type I specificity subunit S.MpnORF289P N-terminus (187 aa).

Belongs to the type-I restriction system S methylase family. The methyltransferase is composed of M and S polypeptides.

Functionally, the N-terminal section of a specificity (S) subunit of a type I methyltransferase (MTase); this subunit dictates DNA sequence specificity. The single R subunit has multiple frameshifts and is probably not expressed. This is Putative type I specificity subunit S.MpnORF289P N-terminus from Mycoplasma pneumoniae (strain ATCC 29342 / M129 / Subtype 1) (Mycoplasmoides pneumoniae).